Here is a 343-residue protein sequence, read N- to C-terminus: Isopentenyl-diphosphate delta-isomerase (343 aa).

A substrate-binding site is contributed by 9-10 (RK). FMN-binding positions include S67, 68–70 (AMT), S98, and N127. 98-100 (SQR) provides a ligand contact to substrate. A substrate-binding site is contributed by Q162. E163 contributes to the Mg(2+) binding site. FMN-binding positions include K194, T224, 273–275 (GVR), and 294–295 (AA).

It belongs to the IPP isomerase type 2 family. As to quaternary structure, homooctamer. Dimer of tetramers. FMN is required as a cofactor. It depends on NADPH as a cofactor. Mg(2+) serves as cofactor.

The protein resides in the cytoplasm. It catalyses the reaction isopentenyl diphosphate = dimethylallyl diphosphate. Functionally, involved in the biosynthesis of isoprenoids. Catalyzes the 1,3-allylic rearrangement of the homoallylic substrate isopentenyl (IPP) to its allylic isomer, dimethylallyl diphosphate (DMAPP). The polypeptide is Isopentenyl-diphosphate delta-isomerase (Xanthobacter autotrophicus (strain ATCC BAA-1158 / Py2)).